A 41-amino-acid polypeptide reads, in one-letter code: Cuticle protein 32 (41 aa).

4 repeat units span residues 17 to 20, 25 to 28, 31 to 34, and 38 to 41.

Its function is as follows. Component of the cuticle of migratory locust which contains more than 100 different structural proteins. The protein is Cuticle protein 32 of Locusta migratoria (Migratory locust).